We begin with the raw amino-acid sequence, 1029 residues long: Beta-galactosidase 2 (1029 aa).

2 residues coordinate substrate: asparagine 104 and aspartate 203. Aspartate 203 lines the Na(+) pocket. Glutamate 418, histidine 420, and glutamate 463 together coordinate Mg(2+). Substrate contacts are provided by residues glutamate 463 and 539-542 (EYAH). The Proton donor role is filled by glutamate 463. Glutamate 539 acts as the Nucleophile in catalysis. Asparagine 599 contributes to the Mg(2+) binding site. Na(+) is bound by residues phenylalanine 603 and asparagine 606. 2 residues coordinate substrate: asparagine 606 and tryptophan 1004.

The protein belongs to the glycosyl hydrolase 2 family. Homotetramer. Mg(2+) is required as a cofactor. The cofactor is Na(+).

The catalysed reaction is Hydrolysis of terminal non-reducing beta-D-galactose residues in beta-D-galactosides.. This is Beta-galactosidase 2 from Enterobacter cloacae.